The following is a 266-amino-acid chain: GTP cyclohydrolase III (266 aa).

This sequence belongs to the archaeal-type GTP cyclohydrolase family.

The catalysed reaction is GTP + 3 H2O = 2-amino-5-formylamino-6-(5-phospho-D-ribosylamino)pyrimidin-4(3H)-one + 2 phosphate + 2 H(+). Catalyzes the formation of 2-amino-5-formylamino-6-ribofuranosylamino-4(3H)-pyrimidinone ribonucleotide monophosphate and inorganic phosphate from GTP. Also has an independent pyrophosphate phosphohydrolase activity. This chain is GTP cyclohydrolase III, found in Methanococcus vannielii (strain ATCC 35089 / DSM 1224 / JCM 13029 / OCM 148 / SB).